Reading from the N-terminus, the 424-residue chain is MSYRRPKGTYDVYPGDAARQEPHERPDLWDRLYDAARDLFRRYGYAEVRTPVFEEAELFVRSTGETSDIVRKEMFVFRDKAGRELALRPEGTAGVVRAYVEHGLYKLAQPVKMWYFGPMFRHERQQKGRYRQHTQIGAEVLGSGDPLVDVEVVALLYAIHRSAGVREEVIHLNNLGDVETRRRYVPELRAFLERHRSELDPDSVARIETNPLRTFDSKDPNTRAVLREAPLIGEYLSEEAAAHLRAVEEGLEALGIPYVRDERLVRGLDYYTSTVFEAKSPVLGAQDTVGAGGRYNRLVEELGGPDVPGIGFGTGVERVLLAARAAEPESALDAFFVTLSPEARLPALQLAEALRAEGLSCELDYAGRSPKGQFRQADRSGASYAVVLGEEELSGGFCTLRDMKSGEERRVSGGPKGLLRAIAG.

Residues 1 to 22 (MSYRRPKGTYDVYPGDAARQEP) are disordered.

It belongs to the class-II aminoacyl-tRNA synthetase family. As to quaternary structure, homodimer.

It is found in the cytoplasm. The enzyme catalyses tRNA(His) + L-histidine + ATP = L-histidyl-tRNA(His) + AMP + diphosphate + H(+). This chain is Histidine--tRNA ligase, found in Rubrobacter xylanophilus (strain DSM 9941 / JCM 11954 / NBRC 16129 / PRD-1).